Consider the following 105-residue polypeptide: MWLSTSPYRKGSQCGEAFSQIPGHNLNKKTPPGVKPPESHVCGEVGVGYPSTERHIRDRLGRKPCEYQECRQKAYTCKPCGNAFRFHHSFHIHERPHSGENLYEC.

The C2H2-type zinc-finger motif lies at tyrosine 75–histidine 97.

The sequence is that of Putative zinc finger protein 861 (ZNF861P) from Homo sapiens (Human).